Consider the following 571-residue polypeptide: Glutamine--tRNA ligase (571 aa).

Positions 35–45 (PEPNGYLHIGH) match the 'HIGH' region motif. Residues 36–38 (EPN) and 42–48 (HIGHAKS) each bind ATP. L-glutamine-binding residues include aspartate 68 and tyrosine 213. Residues threonine 232, 262-263 (RL), and 270-272 (LSK) each bind ATP. Positions 269-273 (ILSKR) match the 'KMSKS' region motif.

The protein belongs to the class-I aminoacyl-tRNA synthetase family. Monomer.

It localises to the cytoplasm. The catalysed reaction is tRNA(Gln) + L-glutamine + ATP = L-glutaminyl-tRNA(Gln) + AMP + diphosphate. The polypeptide is Glutamine--tRNA ligase (Buchnera aphidicola subsp. Acyrthosiphon pisum (strain Tuc7)).